We begin with the raw amino-acid sequence, 93 residues long: UPF0175 protein AF_0100 (93 aa).

Belongs to the UPF0175 family.

This Archaeoglobus fulgidus (strain ATCC 49558 / DSM 4304 / JCM 9628 / NBRC 100126 / VC-16) protein is UPF0175 protein AF_0100.